A 157-amino-acid polypeptide reads, in one-letter code: Transcription elongation factor GreB (157 aa).

The protein belongs to the GreA/GreB family. GreB subfamily.

Functionally, necessary for efficient RNA polymerase transcription elongation past template-encoded arresting sites. The arresting sites in DNA have the property of trapping a certain fraction of elongating RNA polymerases that pass through, resulting in locked ternary complexes. Cleavage of the nascent transcript by cleavage factors such as GreA or GreB allows the resumption of elongation from the new 3'terminus. GreB releases sequences of up to 9 nucleotides in length. The chain is Transcription elongation factor GreB from Salmonella typhi.